The primary structure comprises 101 residues: RNA-binding protein Hfq (101 aa).

One can recognise a Sm domain in the interval 9–68 (DPFLNALRRERVPVSIYLVNGIKLQGQVESFDQFVILLKNTVSQMVYKHAISTVVPSRPV). Positions 63 to 101 (VPSRPVSHHSNTPSGSTNNYHGSNPSAPQQPQQDSDDAE) are disordered. The segment covering 70-86 (HHSNTPSGSTNNYHGSN) has biased composition (polar residues).

This sequence belongs to the Hfq family. As to quaternary structure, homohexamer.

Its function is as follows. RNA chaperone that binds small regulatory RNA (sRNAs) and mRNAs to facilitate mRNA translational regulation in response to envelope stress, environmental stress and changes in metabolite concentrations. Also binds with high specificity to tRNAs. The chain is RNA-binding protein Hfq from Yersinia pseudotuberculosis serotype O:1b (strain IP 31758).